The primary structure comprises 604 residues: M-phase inducer phosphatase cdc-25.1 (604 aa).

Disordered stretches follow at residues 33-67 (PKTL…DVDF) and 127-188 (EKRV…PFGD). Residues 44 to 54 (RDSGVSMTSCS) are compositionally biased toward polar residues. The segment covering 127 to 138 (EKRVMSERPTDN) has biased composition (basic and acidic residues). In terms of domain architecture, Rhodanese spans 305 to 413 (FDKKYIIVDC…LWSTAECRQI (109 aa)). Disordered regions lie at residues 443–464 (ASLK…CTRS) and 562–588 (DFPD…GGHQ).

Belongs to the MPI phosphatase family.

It carries out the reaction O-phospho-L-tyrosyl-[protein] + H2O = L-tyrosyl-[protein] + phosphate. This Caenorhabditis elegans protein is M-phase inducer phosphatase cdc-25.1 (cdc-25.1).